The chain runs to 369 residues: DNA replication and repair protein RecF (369 aa).

30–37 (GDNGSGKT) contributes to the ATP binding site.

It belongs to the RecF family.

The protein resides in the cytoplasm. Its function is as follows. The RecF protein is involved in DNA metabolism; it is required for DNA replication and normal SOS inducibility. RecF binds preferentially to single-stranded, linear DNA. It also seems to bind ATP. This chain is DNA replication and repair protein RecF, found in Pseudomonas paraeruginosa (strain DSM 24068 / PA7) (Pseudomonas aeruginosa (strain PA7)).